Here is an 832-residue protein sequence, read N- to C-terminus: Spindle pole body component alp6 (832 aa).

The interaction with mzt1 stretch occupies residues 1–186; it reads MSEIHVKTAL…STETSSVQHT (186 aa). A Phosphothreonine modification is found at Thr286.

It belongs to the TUBGCP family. In terms of assembly, part of the gamma-tubulin complex. Interacts directly with mzt1. Interacts with mto1. Interacts with mto2.

The protein resides in the cytoplasm. The protein localises to the cytoskeleton. It localises to the microtubule organizing center. It is found in the spindle pole body. Functionally, component of the gamma tubule complex that is required for the regulation of both interphase microtubules and mitotic bipolar spindles. In Schizosaccharomyces pombe (strain 972 / ATCC 24843) (Fission yeast), this protein is Spindle pole body component alp6 (alp6).